A 467-amino-acid chain; its full sequence is Cytochrome c-552 (467 aa).

An N-terminal signal peptide occupies residues 1–27 (MMKKMTGKSFALSALVAASFMAAGAMA). Residue His-87 coordinates heme c. Cys-115, Cys-118, and Lys-119 together coordinate heme. Heme c-binding residues include Cys-153, Cys-156, His-157, Cys-195, Cys-198, and His-199. Ca(2+)-binding residues include Glu-201, Tyr-202, Lys-250, and Gln-252. Tyr-202 contributes to the substrate binding site. His-253 contributes to the substrate binding site. Heme c contacts are provided by His-264, Cys-271, Cys-274, His-275, His-290, Cys-303, Cys-306, His-307, and His-382.

This sequence belongs to the cytochrome c-552 family. Ca(2+) serves as cofactor. It depends on heme c as a cofactor.

It is found in the periplasm. It carries out the reaction 6 Fe(III)-[cytochrome c] + NH4(+) + 2 H2O = 6 Fe(II)-[cytochrome c] + nitrite + 8 H(+). The protein operates within nitrogen metabolism; nitrate reduction (assimilation). Its function is as follows. Catalyzes the reduction of nitrite to ammonia, consuming six electrons in the process. The sequence is that of Cytochrome c-552 from Shewanella sp. (strain MR-4).